The primary structure comprises 311 residues: Succinate dehydrogenase [ubiquinone] iron-sulfur subunit 2, mitochondrial (311 aa).

Residues 1 to 63 constitute a mitochondrion transit peptide; sequence MILRRTLPRL…EEIRDHRRGD (63 aa). The segment at 1-70 is disordered; that stretch reads MILRRTLPRL…RGDAAAASPA (70 aa). Basic and acidic residues predominate over residues 51-63; the sequence is AKEEEIRDHRRGD. The 2Fe-2S ferredoxin-type domain maps to 77-168; sequence FRVYRWSPDA…ATTVTPLPHM (92 aa). Positions 128, 133, and 148 each coordinate [2Fe-2S] cluster. The 31-residue stretch at 211-241 folds into the 4Fe-4S ferredoxin-type domain; it reads ERKRLDGLYECILCACCSAACPSYWWNAEAF. 3 residues coordinate [4Fe-4S] cluster: cysteine 221, cysteine 224, and cysteine 227. Cysteine 231 serves as a coordination point for [3Fe-4S] cluster. Residue tryptophan 236 participates in a ubiquinone binding. [3Fe-4S] cluster-binding residues include cysteine 279 and cysteine 285. Position 289 (cysteine 289) interacts with [4Fe-4S] cluster.

Belongs to the succinate dehydrogenase/fumarate reductase iron-sulfur protein family. In terms of assembly, component of complex II composed of eight subunits in plants: four classical SDH subunits SDH1, SDH2, SDH3 and SDH4 (a flavoprotein (FP), an iron-sulfur protein (IP), and a cytochrome b composed of a large and a small subunit.), as well as four subunits unknown in mitochondria from bacteria and heterotrophic eukaryotes. Requires [2Fe-2S] cluster as cofactor. [3Fe-4S] cluster is required as a cofactor. [4Fe-4S] cluster serves as cofactor.

Its subcellular location is the mitochondrion inner membrane. It carries out the reaction a quinone + succinate = fumarate + a quinol. It participates in carbohydrate metabolism; tricarboxylic acid cycle; fumarate from succinate (eukaryal route): step 1/1. Iron-sulfur protein (IP) subunit of succinate dehydrogenase (SDH) that is involved in complex II of the mitochondrial electron transport chain and is responsible for transferring electrons from succinate to ubiquinone (coenzyme Q). The polypeptide is Succinate dehydrogenase [ubiquinone] iron-sulfur subunit 2, mitochondrial (Oryza sativa subsp. japonica (Rice)).